Reading from the N-terminus, the 241-residue chain is Demethylmenaquinone methyltransferase (241 aa).

Residues Thr73 and Asp92 each contribute to the S-adenosyl-L-methionine site.

This sequence belongs to the class I-like SAM-binding methyltransferase superfamily. MenG/UbiE family.

The catalysed reaction is a 2-demethylmenaquinol + S-adenosyl-L-methionine = a menaquinol + S-adenosyl-L-homocysteine + H(+). It participates in quinol/quinone metabolism; menaquinone biosynthesis; menaquinol from 1,4-dihydroxy-2-naphthoate: step 2/2. In terms of biological role, methyltransferase required for the conversion of demethylmenaquinol (DMKH2) to menaquinol (MKH2). In Chlorobaculum parvum (strain DSM 263 / NCIMB 8327) (Chlorobium vibrioforme subsp. thiosulfatophilum), this protein is Demethylmenaquinone methyltransferase.